The following is a 600-amino-acid chain: Elongation factor 4 (600 aa).

One can recognise a tr-type G domain in the interval 5 to 187; sequence KYIRNFSIIA…AIVNKLPPPK (183 aa). GTP contacts are provided by residues 17 to 22 and 134 to 137; these read DHGKST and NKLD.

This sequence belongs to the TRAFAC class translation factor GTPase superfamily. Classic translation factor GTPase family. LepA subfamily.

It is found in the cell inner membrane. It carries out the reaction GTP + H2O = GDP + phosphate + H(+). Required for accurate and efficient protein synthesis under certain stress conditions. May act as a fidelity factor of the translation reaction, by catalyzing a one-codon backward translocation of tRNAs on improperly translocated ribosomes. Back-translocation proceeds from a post-translocation (POST) complex to a pre-translocation (PRE) complex, thus giving elongation factor G a second chance to translocate the tRNAs correctly. Binds to ribosomes in a GTP-dependent manner. This Rickettsia conorii (strain ATCC VR-613 / Malish 7) protein is Elongation factor 4.